The sequence spans 524 residues: Bifunctional purine biosynthesis protein PurH (524 aa).

The region spanning 1 to 144 is the MGS-like domain; that stretch reads MTRRALVSVS…KNSAHVGVVV (144 aa).

Belongs to the PurH family.

It carries out the reaction (6R)-10-formyltetrahydrofolate + 5-amino-1-(5-phospho-beta-D-ribosyl)imidazole-4-carboxamide = 5-formamido-1-(5-phospho-D-ribosyl)imidazole-4-carboxamide + (6S)-5,6,7,8-tetrahydrofolate. The enzyme catalyses IMP + H2O = 5-formamido-1-(5-phospho-D-ribosyl)imidazole-4-carboxamide. The protein operates within purine metabolism; IMP biosynthesis via de novo pathway; 5-formamido-1-(5-phospho-D-ribosyl)imidazole-4-carboxamide from 5-amino-1-(5-phospho-D-ribosyl)imidazole-4-carboxamide (10-formyl THF route): step 1/1. It functions in the pathway purine metabolism; IMP biosynthesis via de novo pathway; IMP from 5-formamido-1-(5-phospho-D-ribosyl)imidazole-4-carboxamide: step 1/1. This is Bifunctional purine biosynthesis protein PurH from Anaeromyxobacter dehalogenans (strain 2CP-C).